A 143-amino-acid chain; its full sequence is 3-hydroxyacyl-[acyl-carrier-protein] dehydratase FabZ (143 aa).

The active site involves H48.

Belongs to the thioester dehydratase family. FabZ subfamily.

The protein localises to the cytoplasm. The enzyme catalyses a (3R)-hydroxyacyl-[ACP] = a (2E)-enoyl-[ACP] + H2O. Functionally, involved in unsaturated fatty acids biosynthesis. Catalyzes the dehydration of short chain beta-hydroxyacyl-ACPs and long chain saturated and unsaturated beta-hydroxyacyl-ACPs. This chain is 3-hydroxyacyl-[acyl-carrier-protein] dehydratase FabZ, found in Roseiflexus castenholzii (strain DSM 13941 / HLO8).